We begin with the raw amino-acid sequence, 360 residues long: Peptide chain release factor 1 (360 aa).

Position 236 is an N5-methylglutamine (glutamine 236).

Belongs to the prokaryotic/mitochondrial release factor family. Post-translationally, methylated by PrmC. Methylation increases the termination efficiency of RF1.

The protein resides in the cytoplasm. Its function is as follows. Peptide chain release factor 1 directs the termination of translation in response to the peptide chain termination codons UAG and UAA. The polypeptide is Peptide chain release factor 1 (Limosilactobacillus reuteri subsp. reuteri (strain JCM 1112) (Lactobacillus reuteri)).